The primary structure comprises 351 residues: Renin receptor (351 aa).

The first 17 residues, 1–17, serve as a signal peptide directing secretion; sequence MAVLVVFLSFLVADVFG. Topologically, residues 18 to 303 are extracellular; it reads NEFSILRSPG…YNLAYKYNFE (286 aa). Residues 304-324 traverse the membrane as a helical segment; that stretch reads YPVVFNLVLWIMIGLALTLIV. Over 325–351 the chain is Cytoplasmic; sequence TCYNIWNMDPGYDSIIYRMTNQKIRMD. The short motif at 347-351 is the Mediates retrograde transport to the ER element; sequence KIRMD.

Interacts with renin. Accessory component of the multisubunit proton-transporting vacuolar (V)-ATPase protein pump. Interacts (via N-terminus) with ATP6AP1 (via N-terminus). Interacts with ATP6V0D1; ATP6V0D1 is a V-ATPase complex subunit and the interaction promotes V-ATPase complex assembly. Interacts with TMEM9; TMEM9 is a V-ATPase assembly regulator and the interaction induces the interaction with ATP6V0D1. Interacts with VMA21 (via N-terminus); VMA21 is a V-ATPase accessory component. In terms of processing, phosphorylated. Post-translationally, proteolytically cleaved by a furin-like convertase in the trans-Golgi network to generate N- and C-terminal fragments. Expressed in the brain.

The protein localises to the endoplasmic reticulum membrane. It localises to the lysosome membrane. Its subcellular location is the cytoplasmic vesicle. It is found in the autophagosome membrane. The protein resides in the cell projection. The protein localises to the dendritic spine membrane. It localises to the axon. Its subcellular location is the endosome membrane. It is found in the clathrin-coated vesicle membrane. The protein resides in the secretory vesicle. The protein localises to the synaptic vesicle membrane. Multifunctional protein which functions as a renin, prorenin cellular receptor and is involved in the assembly of the lysosomal proton-transporting V-type ATPase (V-ATPase) and the acidification of the endo-lysosomal system. May mediate renin-dependent cellular responses by activating ERK1 and ERK2. By increasing the catalytic efficiency of renin in AGT/angiotensinogen conversion to angiotensin I, may also play a role in the renin-angiotensin system (RAS). Through its function in V-type ATPase (v-ATPase) assembly and acidification of the lysosome it regulates protein degradation and may control different signaling pathways important for proper brain development, synapse morphology and synaptic transmission. The sequence is that of Renin receptor (ATP6AP2) from Bos taurus (Bovine).